A 971-amino-acid chain; its full sequence is Kinesin-like protein KIN-6 (971 aa).

Disordered stretches follow at residues 1–44 (MEEK…SSLA) and 93–121 (TTTT…RNPE). The span at 29–39 (ATPFTTTTKPP) shows a compositional bias: low complexity. The Kinesin motor domain maps to 76–460 (SLKIFLRIKP…LRQASPYMKI (385 aa)). ATP is bound at residue 202–209 (GPSGSGKT). A compositionally biased stretch (basic and acidic residues) spans 700–709 (RREAGSEESS). Disordered regions lie at residues 700–856 (RREA…TEEM) and 872–917 (KTTN…RLQP). The segment covering 768–783 (QSVNSEENVGIPSTIT) has biased composition (polar residues). Over residues 785–797 (VEAEVTDFQRDQN) the composition is skewed to basic and acidic residues. Residues 809-827 (EVSQDCINSGLSNVQTKSA) show a composition bias toward polar residues. Residues 831-842 (RFPDSEKQERNR) are compositionally biased toward basic and acidic residues. A compositionally biased stretch (basic residues) spans 903–915 (KKQKNGQKPKRRL).

This sequence belongs to the TRAFAC class myosin-kinesin ATPase superfamily. Kinesin family. KIN-6 subfamily.

This chain is Kinesin-like protein KIN-6, found in Arabidopsis thaliana (Mouse-ear cress).